A 322-amino-acid chain; its full sequence is D-specific alpha-keto acid dehydrogenase (322 aa).

Residues 156-157, 229-231, and Asp-255 contribute to the NAD(+) site; these read QI and TGR. Arg-231 is an active-site residue. Residue Glu-260 is part of the active site. His-292 (proton donor) is an active-site residue. 292–295 is an NAD(+) binding site; that stretch reads HTAY.

The protein belongs to the D-isomer specific 2-hydroxyacid dehydrogenase family.

The catalysed reaction is a (2R)-2-hydroxycarboxylate + NADP(+) = a 2-oxocarboxylate + NADPH + H(+). It catalyses the reaction a (2R)-2-hydroxycarboxylate + NAD(+) = a 2-oxocarboxylate + NADH + H(+). It carries out the reaction (R)-lactate + NADP(+) = pyruvate + NADPH + H(+). The enzyme catalyses (R)-lactate + NAD(+) = pyruvate + NADH + H(+). The catalysed reaction is (2R)-hydroxybutanoate + NADP(+) = 2-oxobutanoate + NADPH + H(+). In terms of biological role, required for high-level resistance to glycopeptide antibiotics. Catalyzes the reduction of 2-keto acids to 2-D-hydroxy acids, exhibiting highest catalytic efficiency with pyruvate and 2-oxobutanoate/alpha-ketobutyrate as substrates, producing D-lactate and (2R)-hydroxybutanoate, respectively. Together with D-alanine--D-lactate ligase VanA, gives rise to peptidoglycan precursors that terminate in the depsipeptide D-alanine-D-lactate rather than the dipeptide D-alanine-D-alanine thus preventing vancomycin binding. Shows a slight preference for NADPH over NADH as the electron donor. This is D-specific alpha-keto acid dehydrogenase from Enterococcus faecium (Streptococcus faecium).